Here is a 553-residue protein sequence, read N- to C-terminus: Putative transport protein YidE (553 aa).

A run of 5 helical transmembrane segments spans residues 4 to 24, 28 to 48, 65 to 85, 95 to 115, and 158 to 178; these read IALT…IGNV, GIGL…HFVS, FGLI…FFAS, LFAV…HKLF, and MSYA…MWML. RCK C-terminal domains lie at 191–276 and 279–361; these read QQHE…VIGQ and DTSL…VLGN. Helical transmembrane passes span 371-391, 393-413, 439-459, 464-484, 493-513, and 533-553; these read MLPV…PVFV, GFPA…ALIL, IVLF…NTLV, LSWI…VGIL, YLTM…LAFA, and LVMF…WSIG.

It belongs to the AAE transporter (TC 2.A.81) family. YidE subfamily.

It localises to the cell membrane. This is Putative transport protein YidE from Shigella boydii serotype 4 (strain Sb227).